A 446-amino-acid polypeptide reads, in one-letter code: Na(+)-translocating NADH-quinone reductase subunit A (446 aa).

Belongs to the NqrA family. As to quaternary structure, composed of six subunits; NqrA, NqrB, NqrC, NqrD, NqrE and NqrF.

The enzyme catalyses a ubiquinone + n Na(+)(in) + NADH + H(+) = a ubiquinol + n Na(+)(out) + NAD(+). NQR complex catalyzes the reduction of ubiquinone-1 to ubiquinol by two successive reactions, coupled with the transport of Na(+) ions from the cytoplasm to the periplasm. NqrA to NqrE are probably involved in the second step, the conversion of ubisemiquinone to ubiquinol. This chain is Na(+)-translocating NADH-quinone reductase subunit A, found in Vibrio parahaemolyticus serotype O3:K6 (strain RIMD 2210633).